The sequence spans 102 residues: Small ribosomal subunit protein uS10 (102 aa).

This sequence belongs to the universal ribosomal protein uS10 family. As to quaternary structure, part of the 30S ribosomal subunit.

Functionally, involved in the binding of tRNA to the ribosomes. The polypeptide is Small ribosomal subunit protein uS10 (Methylobacterium nodulans (strain LMG 21967 / CNCM I-2342 / ORS 2060)).